A 447-amino-acid polypeptide reads, in one-letter code: Elongation factor 1-alpha (447 aa).

In terms of domain architecture, tr-type G spans 5–230 (KVHINIVVIG…DNINEPKRPS (226 aa)). The interval 14–21 (GHVDSGKS) is G1. 14–21 (GHVDSGKS) lines the GTP pocket. K55 carries the N6,N6-dimethyllysine modification. The interval 70 to 74 (GITID) is G2. Position 79 is an N6,N6,N6-trimethyllysine (K79). The G3 stretch occupies residues 91–94 (DAPG). Residues 91–95 (DAPGH) and 153–156 (NKMD) contribute to the GTP site. A G4 region spans residues 153 to 156 (NKMD). K187 is modified (N6,N6,N6-trimethyllysine). Residues 194 to 196 (SGF) are G5. K261 carries the post-translational modification N6-methyllysine. 5-glutamyl glycerylphosphorylethanolamine is present on E289. The residue at position 306 (K306) is an N6,N6,N6-trimethyllysine. E362 is modified (5-glutamyl glycerylphosphorylethanolamine). An N6,N6,N6-trimethyllysine modification is found at K396.

The protein belongs to the TRAFAC class translation factor GTPase superfamily. Classic translation factor GTPase family. EF-Tu/EF-1A subfamily.

The protein resides in the cytoplasm. In terms of biological role, this protein promotes the GTP-dependent binding of aminoacyl-tRNA to the A-site of ribosomes during protein biosynthesis. The protein is Elongation factor 1-alpha of Pisum sativum (Garden pea).